Consider the following 474-residue polypeptide: Probable glycine dehydrogenase (decarboxylating) subunit 2 (474 aa).

Residue K262 is modified to N6-(pyridoxal phosphate)lysine.

It belongs to the GcvP family. C-terminal subunit subfamily. The glycine cleavage system is composed of four proteins: P, T, L and H. In this organism, the P 'protein' is a heterodimer of two subunits. It depends on pyridoxal 5'-phosphate as a cofactor.

It catalyses the reaction N(6)-[(R)-lipoyl]-L-lysyl-[glycine-cleavage complex H protein] + glycine + H(+) = N(6)-[(R)-S(8)-aminomethyldihydrolipoyl]-L-lysyl-[glycine-cleavage complex H protein] + CO2. In terms of biological role, the glycine cleavage system catalyzes the degradation of glycine. The P protein binds the alpha-amino group of glycine through its pyridoxal phosphate cofactor; CO(2) is released and the remaining methylamine moiety is then transferred to the lipoamide cofactor of the H protein. The sequence is that of Probable glycine dehydrogenase (decarboxylating) subunit 2 from Thermotoga maritima (strain ATCC 43589 / DSM 3109 / JCM 10099 / NBRC 100826 / MSB8).